A 125-amino-acid polypeptide reads, in one-letter code: UPF0102 protein mlr4633 (125 aa).

It belongs to the UPF0102 family.

In Mesorhizobium japonicum (strain LMG 29417 / CECT 9101 / MAFF 303099) (Mesorhizobium loti (strain MAFF 303099)), this protein is UPF0102 protein mlr4633.